The primary structure comprises 262 residues: Ribosomal RNA small subunit methyltransferase A (262 aa).

6 residues coordinate S-adenosyl-L-methionine: H16, L18, G43, E64, D89, and N109.

Belongs to the class I-like SAM-binding methyltransferase superfamily. rRNA adenine N(6)-methyltransferase family. RsmA subfamily.

Its subcellular location is the cytoplasm. It carries out the reaction adenosine(1518)/adenosine(1519) in 16S rRNA + 4 S-adenosyl-L-methionine = N(6)-dimethyladenosine(1518)/N(6)-dimethyladenosine(1519) in 16S rRNA + 4 S-adenosyl-L-homocysteine + 4 H(+). In terms of biological role, specifically dimethylates two adjacent adenosines (A1518 and A1519) in the loop of a conserved hairpin near the 3'-end of 16S rRNA in the 30S particle. May play a critical role in biogenesis of 30S subunits. This Xanthomonas axonopodis pv. citri (strain 306) protein is Ribosomal RNA small subunit methyltransferase A.